Reading from the N-terminus, the 941-residue chain is Protein translocase subunit SecA (941 aa).

ATP contacts are provided by residues glutamine 87, 105–109, and aspartate 524; that span reads GEGKT. The interval 871–919 is disordered; that stretch reads DEQPPMPAMEAHKLDPNTGEDQVAQAQSGLAPVAPAKRDPANPATWGKV. Residues cysteine 925, cysteine 927, cysteine 936, and histidine 937 each contribute to the Zn(2+) site.

This sequence belongs to the SecA family. Monomer and homodimer. Part of the essential Sec protein translocation apparatus which comprises SecA, SecYEG and auxiliary proteins SecDF-YajC and YidC. Zn(2+) is required as a cofactor.

The protein resides in the cell inner membrane. It is found in the cytoplasm. It catalyses the reaction ATP + H2O + cellular proteinSide 1 = ADP + phosphate + cellular proteinSide 2.. Its function is as follows. Part of the Sec protein translocase complex. Interacts with the SecYEG preprotein conducting channel. Has a central role in coupling the hydrolysis of ATP to the transfer of proteins into and across the cell membrane, serving both as a receptor for the preprotein-SecB complex and as an ATP-driven molecular motor driving the stepwise translocation of polypeptide chains across the membrane. This chain is Protein translocase subunit SecA, found in Afipia carboxidovorans (strain ATCC 49405 / DSM 1227 / KCTC 32145 / OM5) (Oligotropha carboxidovorans).